A 132-amino-acid polypeptide reads, in one-letter code: UPF0299 membrane protein CKO_00648 (132 aa).

Transmembrane regions (helical) follow at residues 7-27 (IIWQ…AGIF), 31-51 (LLPI…VLLA), 63-83 (GCYV…VGVM), and 93-113 (FGPV…VVSW).

Belongs to the UPF0299 family.

It is found in the cell inner membrane. In Citrobacter koseri (strain ATCC BAA-895 / CDC 4225-83 / SGSC4696), this protein is UPF0299 membrane protein CKO_00648.